The chain runs to 224 residues: Deoxyguanosine kinase (224 aa).

An ATP-binding site is contributed by 8–16 (GPIGAGKSS). Residues Glu-32, Tyr-44, and Gln-55 each contribute to the substrate site. The Proton acceptor role is filled by Asp-78. Substrate contacts are provided by Arg-79, Asp-84, and Glu-149.

It belongs to the DCK/DGK family. Heterodimer of a deoxyadenosine (DAK) and a deoxyguanosine kinase (DGK).

The enzyme catalyses 2'-deoxyguanosine + ATP = dGMP + ADP + H(+). Its function is as follows. DGK/DAK plays an essential role in generating the deoxyribonucleotide precursors, dGTP and dATP, for DNA metabolism. In Lactobacillus johnsonii (strain CNCM I-12250 / La1 / NCC 533), this protein is Deoxyguanosine kinase.